A 367-amino-acid chain; its full sequence is Glutamate 5-kinase (367 aa).

Lys-10 contacts ATP. Positions 50, 137, and 149 each coordinate substrate. ATP-binding positions include 169 to 170 and 211 to 217; these read TD and TGGMATK. The PUA domain maps to 275 to 353; sequence AGVIIVDNGA…QEISQILGYE (79 aa).

This sequence belongs to the glutamate 5-kinase family.

The protein localises to the cytoplasm. It catalyses the reaction L-glutamate + ATP = L-glutamyl 5-phosphate + ADP. It functions in the pathway amino-acid biosynthesis; L-proline biosynthesis; L-glutamate 5-semialdehyde from L-glutamate: step 1/2. Catalyzes the transfer of a phosphate group to glutamate to form L-glutamate 5-phosphate. This chain is Glutamate 5-kinase, found in Proteus mirabilis (strain HI4320).